The sequence spans 519 residues: Putative lipase ATG15 (519 aa).

The Cytoplasmic portion of the chain corresponds to 1-5 (MYIPG). Residues 6-26 (PLRLSSYLLPFLSSPSPPAQS) traverse the membrane as a helical; Signal-anchor for type II membrane protein segment. Residues 27–519 (SPDTRTISFK…CYKWEFGEWN (493 aa)) lie on the Lumenal side of the membrane. Residues asparagine 48, asparagine 133, asparagine 196, asparagine 220, asparagine 302, and asparagine 309 are each glycosylated (N-linked (GlcNAc...) asparagine). Catalysis depends on serine 318, which acts as the Charge relay system. Asparagine 361 carries N-linked (GlcNAc...) asparagine glycosylation. Positions 481 to 502 (RRGPKRQPGGEDPKHGGVPKPV) are disordered.

It belongs to the AB hydrolase superfamily. Lipase family. In terms of assembly, binds to both phosphatidylinositol (PI) and phosphatidylinositol 3,5-bisphosphate (PIP2).

It is found in the endosome. Its subcellular location is the multivesicular body membrane. It localises to the prevacuolar compartment membrane. It catalyses the reaction a triacylglycerol + H2O = a diacylglycerol + a fatty acid + H(+). Its function is as follows. Lipase which is essential for lysis of subvacuolar cytoplasm to vacuole targeted bodies and intravacuolar autophagic bodies. Involved in the lysis of intravacuolar multivesicular body (MVB) vesicles. The intravacuolar membrane disintegration by ATG15 is critical to life span extension. In Cryptococcus neoformans var. neoformans serotype D (strain B-3501A) (Filobasidiella neoformans), this protein is Putative lipase ATG15 (ATG15).